Here is a 390-residue protein sequence, read N- to C-terminus: UDP-galactose translocator (390 aa).

The disordered stretch occupies residues 1-24 (MAAVGVGGSTAAAGAGAVSSGALE). The next 10 membrane-spanning stretches (helical) occupy residues 3-23 (AVGVGGSTAAAGAGAVSSGAL), 37-57 (YISLAVLVVQNASLILSIRYA), 65-85 (FFATTAVVMAEVLKGLTCLLL), 97-117 (LVLFLHEAVLVQYVDTLKLAV), 140-160 (TFQVTYQLKILTTALFSVLML), 169-189 (WASLLLLFTGVAIVQAQQAGG), 200-220 (GAGLAAVVASCLSSGFAGVYF), 238-258 (LGLFGTALGLVGLWWAEGTAV), 269-289 (PAVWGVVLNQAFGGLLVAVVV), and 315-335 (LFGFHLDPLFALGAGLVIGAV). Over residues 9 to 22 (STAAAGAGAVSSGA) the composition is skewed to low complexity. A disordered region spans residues 356-390 (PCIHQQPPGQPPPPQLSSRGDLTTEPFLPKSVLVK).

It belongs to the nucleotide-sugar transporter family. SLC35A subfamily. As to quaternary structure, interacts with SLC35A3; the interaction is reduced in the presence of SLC35A4. Found in a complex with SLC35A3 and SLC35A4.

Its subcellular location is the golgi apparatus membrane. It catalyses the reaction UMP(out) + UDP-alpha-D-galactose(in) = UMP(in) + UDP-alpha-D-galactose(out). The enzyme catalyses UDP-N-acetyl-alpha-D-galactosamine(in) + UMP(out) = UDP-N-acetyl-alpha-D-galactosamine(out) + UMP(in). It carries out the reaction UMP(out) + UDP-alpha-D-glucose(in) = UMP(in) + UDP-alpha-D-glucose(out). The catalysed reaction is UMP(out) + UDP-N-acetyl-alpha-D-glucosamine(in) = UMP(in) + UDP-N-acetyl-alpha-D-glucosamine(out). It catalyses the reaction UDP-alpha-D-galactose(in) + AMP(out) = UDP-alpha-D-galactose(out) + AMP(in). The enzyme catalyses UDP-alpha-D-galactose(in) + CMP(out) = UDP-alpha-D-galactose(out) + CMP(in). It carries out the reaction UDP-N-acetyl-alpha-D-galactosamine(out) + UDP-alpha-D-galactose(in) = UDP-N-acetyl-alpha-D-galactosamine(in) + UDP-alpha-D-galactose(out). The catalysed reaction is UDP-N-acetyl-alpha-D-glucosamine(out) + UDP-alpha-D-galactose(in) = UDP-N-acetyl-alpha-D-glucosamine(in) + UDP-alpha-D-galactose(out). It catalyses the reaction UDP-alpha-D-galactose(in) + UDP-alpha-D-glucose(out) = UDP-alpha-D-galactose(out) + UDP-alpha-D-glucose(in). The enzyme catalyses UMP(out) + CMP(in) = UMP(in) + CMP(out). It carries out the reaction UMP(out) + AMP(in) = UMP(in) + AMP(out). Transports uridine diphosphate galactose (UDP-galactose) from the cytosol into the Golgi apparatus. It functions as an antiporter that exchanges UDP-galactose for UMP. It is also able to exchange UDP-galactose for AMP and CMP, and to transport UDP-N-acetylgalactosamine (UDP-GalNAc) and other nucleotide sugars. As a provider of UDP-galactose to galactosyltransferases present in the Golgi apparatus, it is necessary for globotriaosylceramide/globoside (Gb3Cer) synthesis from lactosylceramide. This chain is UDP-galactose translocator, found in Mus musculus (Mouse).